A 553-amino-acid polypeptide reads, in one-letter code: Hyaluronan synthase 3 (553 aa).

Over 1 to 15 (MPVQLTTALRVVGTS) the chain is Cytoplasmic. A helical membrane pass occupies residues 16–36 (LFALAVLGGILAAYVTGYQFI). Residues 37–44 (HTEKHYLS) are Extracellular-facing. A helical transmembrane segment spans residues 45 to 65 (FGLYGAILGLHLLIQSLFAFL). At 66-377 (EHRRMRRAGQ…NSLWFHKHHL (312 aa)) the chain is on the cytoplasmic side. The chain crosses the membrane as a helical span at residues 378–398 (WMTYESVVTGFFPFFLIATVI). The Extracellular segment spans residues 399–408 (QLFYRGRIWN). Residues 409-429 (ILLFLLTVQLVGIIKATYACF) form a helical membrane-spanning segment. Topologically, residues 430–440 (LRGNAEMIFMS) are cytoplasmic. Residues 441–461 (LYSLLYMSSLLPAKIFAIATI) form a helical membrane-spanning segment. Asparagine 462 carries an N-linked (GlcNAc...) asparagine glycan. The Extracellular portion of the chain corresponds to 462–473 (NKSGWGTSGRKT). Residues 474 to 494 (IVVNFIGLIPVSIWVAVLLGG) form a helical membrane-spanning segment. Over 495 to 515 (LAYTAYCQDLFSETELAFLVS) the chain is Cytoplasmic. The chain crosses the membrane as a helical span at residues 516 to 536 (GAILYGCYWVALLMLYLAIIA). The Extracellular segment spans residues 537–553 (RRCGKKPEQYSLAFAEV).

Belongs to the NodC/HAS family. As to quaternary structure, homodimers. Forms heterodimers with HAS2 and HAS1. Requires Mg(2+) as cofactor. O-GlcNAcylation increases the hyaluronan synthase activity, HAS3 stability and its plasma membrane residence. The concentration of UDP-GlcNAc controls the level of O-GlcNAc modification.

The protein localises to the cell membrane. The protein resides in the golgi apparatus membrane. It localises to the golgi apparatus. It is found in the trans-Golgi network membrane. Its subcellular location is the early endosome. It catalyses the reaction [hyaluronan](n) + UDP-N-acetyl-alpha-D-glucosamine = N-acetyl-beta-D-glucosaminyl-(1-&gt;4)-[hyaluronan](n) + UDP + H(+). It carries out the reaction N-acetyl-beta-D-glucosaminyl-(1-&gt;4)-[hyaluronan](n) + UDP-alpha-D-glucuronate = [hyaluronan](n+1) + UDP + H(+). The protein operates within glycan biosynthesis; hyaluronan biosynthesis. The enzymatic activity depends on the availability of cytosolic levels of UDP-GlcUA and UDP-GlcNAc. Its function is as follows. Catalyzes the addition of GlcNAc or GlcUA monosaccharides to the nascent hyaluronan polymer. Therefore, it is essential to hyaluronan synthesis a major component of most extracellular matrices that has a structural role in tissues architectures and regulates cell adhesion, migration and differentiation. This is one of three isoenzymes responsible for cellular hyaluronan synthesis. The chain is Hyaluronan synthase 3 from Homo sapiens (Human).